The following is a 447-amino-acid chain: ATP synthase subunit beta (447 aa).

ATP is bound at residue 147 to 154 (GGAGVGKT).

The protein belongs to the ATPase alpha/beta chains family. F-type ATPases have 2 components, CF(1) - the catalytic core - and CF(0) - the membrane proton channel. CF(1) has five subunits: alpha(3), beta(3), gamma(1), delta(1), epsilon(1). CF(0) has three main subunits: a(1), b(2) and c(9-12). The alpha and beta chains form an alternating ring which encloses part of the gamma chain. CF(1) is attached to CF(0) by a central stalk formed by the gamma and epsilon chains, while a peripheral stalk is formed by the delta and b chains.

It is found in the cell membrane. It catalyses the reaction ATP + H2O + 4 H(+)(in) = ADP + phosphate + 5 H(+)(out). Its function is as follows. Produces ATP from ADP in the presence of a proton gradient across the membrane. The catalytic sites are hosted primarily by the beta subunits. The chain is ATP synthase subunit beta from Carsonella ruddii (strain PV).